A 208-amino-acid polypeptide reads, in one-letter code: Glycerol-3-phosphate acyltransferase (208 aa).

5 consecutive transmembrane segments (helical) span residues 3-23, 51-71, 78-98, 115-135, and 140-160; these read ILLA…VVVS, KAAI…VWLA, DVAI…PVFF, AVHP…AFFF, and LAAL…FGMP.

The protein belongs to the PlsY family. In terms of assembly, probably interacts with PlsX.

Its subcellular location is the cell inner membrane. The catalysed reaction is an acyl phosphate + sn-glycerol 3-phosphate = a 1-acyl-sn-glycero-3-phosphate + phosphate. It participates in lipid metabolism; phospholipid metabolism. Catalyzes the transfer of an acyl group from acyl-phosphate (acyl-PO(4)) to glycerol-3-phosphate (G3P) to form lysophosphatidic acid (LPA). This enzyme utilizes acyl-phosphate as fatty acyl donor, but not acyl-CoA or acyl-ACP. This is Glycerol-3-phosphate acyltransferase from Burkholderia orbicola (strain MC0-3).